A 524-amino-acid chain; its full sequence is Cytochrome P450 4F3 (524 aa).

A helical transmembrane segment spans residues 19-39; sequence WLLLLLAGASCLLAYILTPIY. Residue Cys-468 coordinates heme.

This sequence belongs to the cytochrome P450 family. Heme is required as a cofactor. As to expression, highest level in polymorphonuclear leukocytes and dendritic cells. Detectable in lymph nodes, spleen, bone marrow and peripheral blood. Highly expressed in ovary. Very low level in liver, kidney, and smooth muscle. Expressed in neutrophils (at protein level).

The protein resides in the endoplasmic reticulum membrane. Its subcellular location is the microsome membrane. The catalysed reaction is leukotriene B4 + reduced [NADPH--hemoprotein reductase] + O2 = 18-hydroxy-leukotriene B4 + oxidized [NADPH--hemoprotein reductase] + H2O + H(+). It catalyses the reaction leukotriene B4 + reduced [NADPH--hemoprotein reductase] + O2 = 19-hydroxy-leukotriene B4 + oxidized [NADPH--hemoprotein reductase] + H2O + H(+). It participates in lipid metabolism; leukotriene B4 degradation. In terms of biological role, a cytochrome P450 monooxygenase involved in the metabolism of the pro-inflammatory lipid mediator leukotriene B4 (LTB4). Hydroxylates at the omega-1 and omega-2 positions LTB4. This oxidation step leads to LTB4 inactivation, which is postulated to be a crucial part of the resolution of inflammation. Mechanistically, uses molecular oxygen inserting one oxygen atom into a substrate, and reducing the second into a water molecule, with two electrons provided by NADPH via cytochrome P450 reductase (CPR; NADPH-ferrihemoprotein reductase). The sequence is that of Cytochrome P450 4F3 from Mus musculus (Mouse).